The following is a 342-amino-acid chain: MDVQQFDFDLPEHLIAQHPLEDRTSSRLLVLEKQTGNIVHQQFTHLIDHLQAGDVLVMNDSRVLPARLIGEKTDTGAKIEILLLKSLGEDRWETLVKPGKRMKPGTEVVFGNGLLRCVCEDVTETGGRIVRFLYEGIFYEILDQLGSMPLPPYIHAQLEDSERYQTVYAKERGSAAAPTAGLHFTKPYLEQIAAKGVQLAYVTLHVGLGTFRPVSADSVEEHVMHAEYYEIPEETVELVNQAKAEGRRVIAVGTTSCRTLETVGRANGGKLVATSGWTDIFIYPGYTFSILDGLLTNFHLPKSTLVMLVSALAGKENVMRAYKRAVEEEYRFFSFGDAMLIL.

Belongs to the QueA family. Monomer.

It is found in the cytoplasm. The enzyme catalyses 7-aminomethyl-7-carbaguanosine(34) in tRNA + S-adenosyl-L-methionine = epoxyqueuosine(34) in tRNA + adenine + L-methionine + 2 H(+). The protein operates within tRNA modification; tRNA-queuosine biosynthesis. In terms of biological role, transfers and isomerizes the ribose moiety from AdoMet to the 7-aminomethyl group of 7-deazaguanine (preQ1-tRNA) to give epoxyqueuosine (oQ-tRNA). This chain is S-adenosylmethionine:tRNA ribosyltransferase-isomerase, found in Brevibacillus brevis (strain 47 / JCM 6285 / NBRC 100599).